The primary structure comprises 541 residues: Mesoderm induction early response protein 2 (541 aa).

Ser11 bears the Phosphoserine mark. 2 disordered regions span residues 100–119 (DPISEQESEGGDTAPALPDM) and 131–186 (LSGE…EEDA). Residues 140 to 165 (QSSADDLTPSVTSHEASDLFHNQSGS) are compositionally biased toward polar residues. Positions 194-291 (KEIMVGPQFQ…EALRRLRFNV (98 aa)) constitute an ELM2 domain. In terms of domain architecture, SANT spans 296–348 (DGLCAWSEEECRNFEHGFRVHGKNFHLIQANKVRTRSVGECVEYYYLWKKSER). The tract at residues 364 to 440 (VSSGTTDTEQ…EPPAVPSLQQ (77 aa)) is disordered.

In terms of assembly, part of a complex containing at least CDYL, MIER1, MIER2, HDAC1 and HDAC2.

It localises to the nucleus. Its function is as follows. Transcriptional repressor. This is Mesoderm induction early response protein 2 (Mier2) from Mus musculus (Mouse).